The sequence spans 553 residues: CTP synthase (553 aa).

Residues 1 to 275 form an amidoligase domain region; that stretch reads MPTETEYDPS…DQYVMEQFDM (275 aa). Residue Ser-24 participates in CTP binding. Residue Ser-24 coordinates UTP. Residue 25–30 coordinates ATP; it reads GLGKGI. Tyr-65 provides a ligand contact to L-glutamine. Asp-82 is a binding site for ATP. Residues Asp-82 and Glu-150 each contribute to the Mg(2+) site. CTP contacts are provided by residues 157 to 159, 196 to 201, and Lys-232; these read DIE and KTKPTQ. Residues 196 to 201 and Lys-232 each bind UTP; that span reads KTKPTQ. A Glutamine amidotransferase type-1 domain is found at 308–540; that stretch reads KYALEDAYMS…LDAVLERADV (233 aa). Gly-362 contributes to the L-glutamine binding site. The active-site Nucleophile; for glutamine hydrolysis is the Cys-389. Residues 390 to 393, Glu-413, and Arg-470 contribute to the L-glutamine site; that span reads LGFQ. Catalysis depends on residues His-513 and Glu-515.

The protein belongs to the CTP synthase family. Homotetramer.

It carries out the reaction UTP + L-glutamine + ATP + H2O = CTP + L-glutamate + ADP + phosphate + 2 H(+). The enzyme catalyses L-glutamine + H2O = L-glutamate + NH4(+). The catalysed reaction is UTP + NH4(+) + ATP = CTP + ADP + phosphate + 2 H(+). It participates in pyrimidine metabolism; CTP biosynthesis via de novo pathway; CTP from UDP: step 2/2. Allosterically activated by GTP, when glutamine is the substrate; GTP has no effect on the reaction when ammonia is the substrate. The allosteric effector GTP functions by stabilizing the protein conformation that binds the tetrahedral intermediate(s) formed during glutamine hydrolysis. Inhibited by the product CTP, via allosteric rather than competitive inhibition. Catalyzes the ATP-dependent amination of UTP to CTP with either L-glutamine or ammonia as the source of nitrogen. Regulates intracellular CTP levels through interactions with the four ribonucleotide triphosphates. The polypeptide is CTP synthase (Halobacterium salinarum (strain ATCC 29341 / DSM 671 / R1)).